The chain runs to 323 residues: tRNA U34 carboxymethyltransferase (323 aa).

Residues Lys91, Trp105, Lys110, Gly130, 181–182, Met196, Tyr200, and Arg315 contribute to the carboxy-S-adenosyl-L-methionine site; that span reads IE.

This sequence belongs to the class I-like SAM-binding methyltransferase superfamily. CmoB family. In terms of assembly, homotetramer.

The enzyme catalyses carboxy-S-adenosyl-L-methionine + 5-hydroxyuridine(34) in tRNA = 5-carboxymethoxyuridine(34) in tRNA + S-adenosyl-L-homocysteine + H(+). Its function is as follows. Catalyzes carboxymethyl transfer from carboxy-S-adenosyl-L-methionine (Cx-SAM) to 5-hydroxyuridine (ho5U) to form 5-carboxymethoxyuridine (cmo5U) at position 34 in tRNAs. This is tRNA U34 carboxymethyltransferase from Yersinia pseudotuberculosis serotype IB (strain PB1/+).